Reading from the N-terminus, the 527-residue chain is MASDFLPVRRALLSVSDKTGLIDLARALVARNVELLSTGGTAKAIREAGLPVKDVAELTGFPEMMDGRVKTLHPLVHGGLLGRAGVDEAVMAEHGIVPIDLLVLNLYPFESVTVKADCTLADAVENIDIGGPAMLRSAAKNFARVAVAADPAQYADLLVELEANDGQLSAAKRFALSVAAFNRVAQYDAAISNYLSAVADSAEAVPTRSPFPAQINSNFVKVMDLRYGENPHQSGAFYRDLYPVPGTLATFQQLQGKELSYNNLADADAAWECVRQFDAPACVIVKHANPCGVAVGAGCGDAYELAYATDPTSAFGGILAFNKTLDAATAKAILDRQFVEVLIAPDYEAGALEYATKKANVRVLKIPHGNGLNNYDTKRIGSGLLMQSADNRGMSQGELSVVTQRAPNEAELGDLLFAWRVAKYVKSNAIVYAKDNRTIGVGAGQMSRVVSAKIAALKAEEAKLTVAGSVMASDAFFPFRDGIDAAAAAGIKAVIQPGGSMRDGEVIAAADEHGIAMVFTGVRHFRH.

In terms of domain architecture, MGS-like spans 1–149; sequence MASDFLPVRR…KNFARVAVAA (149 aa).

It belongs to the PurH family.

The catalysed reaction is (6R)-10-formyltetrahydrofolate + 5-amino-1-(5-phospho-beta-D-ribosyl)imidazole-4-carboxamide = 5-formamido-1-(5-phospho-D-ribosyl)imidazole-4-carboxamide + (6S)-5,6,7,8-tetrahydrofolate. It carries out the reaction IMP + H2O = 5-formamido-1-(5-phospho-D-ribosyl)imidazole-4-carboxamide. It functions in the pathway purine metabolism; IMP biosynthesis via de novo pathway; 5-formamido-1-(5-phospho-D-ribosyl)imidazole-4-carboxamide from 5-amino-1-(5-phospho-D-ribosyl)imidazole-4-carboxamide (10-formyl THF route): step 1/1. Its pathway is purine metabolism; IMP biosynthesis via de novo pathway; IMP from 5-formamido-1-(5-phospho-D-ribosyl)imidazole-4-carboxamide: step 1/1. The protein is Bifunctional purine biosynthesis protein PurH of Xanthomonas axonopodis pv. citri (strain 306).